The following is a 427-amino-acid chain: Gamma-glutamyl phosphate reductase (427 aa).

It belongs to the gamma-glutamyl phosphate reductase family.

Its subcellular location is the cytoplasm. It catalyses the reaction L-glutamate 5-semialdehyde + phosphate + NADP(+) = L-glutamyl 5-phosphate + NADPH + H(+). It participates in amino-acid biosynthesis; L-proline biosynthesis; L-glutamate 5-semialdehyde from L-glutamate: step 2/2. Its function is as follows. Catalyzes the NADPH-dependent reduction of L-glutamate 5-phosphate into L-glutamate 5-semialdehyde and phosphate. The product spontaneously undergoes cyclization to form 1-pyrroline-5-carboxylate. The polypeptide is Gamma-glutamyl phosphate reductase (Rhizobium meliloti (strain 1021) (Ensifer meliloti)).